The sequence spans 355 residues: UDP-3-O-acylglucosamine N-acyltransferase (355 aa).

The active-site Proton acceptor is the H252.

This sequence belongs to the transferase hexapeptide repeat family. LpxD subfamily. In terms of assembly, homotrimer.

It carries out the reaction a UDP-3-O-[(3R)-3-hydroxyacyl]-alpha-D-glucosamine + a (3R)-hydroxyacyl-[ACP] = a UDP-2-N,3-O-bis[(3R)-3-hydroxyacyl]-alpha-D-glucosamine + holo-[ACP] + H(+). It functions in the pathway bacterial outer membrane biogenesis; LPS lipid A biosynthesis. In terms of biological role, catalyzes the N-acylation of UDP-3-O-acylglucosamine using 3-hydroxyacyl-ACP as the acyl donor. Is involved in the biosynthesis of lipid A, a phosphorylated glycolipid that anchors the lipopolysaccharide to the outer membrane of the cell. The sequence is that of UDP-3-O-acylglucosamine N-acyltransferase from Polynucleobacter asymbioticus (strain DSM 18221 / CIP 109841 / QLW-P1DMWA-1) (Polynucleobacter necessarius subsp. asymbioticus).